The chain runs to 529 residues: Corneodesmosin (529 aa).

An N-terminal signal peptide occupies residues 1-32; sequence MGSSRAPWMGRVGGHGMMALLLAGLLLPGTLA. Disordered stretches follow at residues 38-248 and 383-492; these read FSDP…SVSG and GSTG…SSAG. 6 stretches are compositionally biased toward low complexity: residues 58-83, 90-100, 111-175, 189-231, 392-408, and 426-441; these read GKGD…SARS, GSSSGSSIAQG, GYSQ…NGSA, PSQP…SGGP, SPSS…SSSS, and PGTG…QSSG. Asn172 carries N-linked (GlcNAc...) asparagine glycosylation. Polar residues predominate over residues 449 to 467; sequence GSKSSSSGHPCMSVSSLTL.

As to expression, exclusively expressed in skin.

The protein localises to the secreted. Functionally, important for the epidermal barrier integrity. The chain is Corneodesmosin (CDSN) from Homo sapiens (Human).